The primary structure comprises 806 residues: Leucine--tRNA ligase (806 aa).

The 'HIGH' region signature appears at 40-51; the sequence is PYPSGKGLHVGH. The 'KMSKS' region motif lies at 580 to 584; it reads KMSKS. An ATP-binding site is contributed by lysine 583.

This sequence belongs to the class-I aminoacyl-tRNA synthetase family.

It is found in the cytoplasm. It catalyses the reaction tRNA(Leu) + L-leucine + ATP = L-leucyl-tRNA(Leu) + AMP + diphosphate. The sequence is that of Leucine--tRNA ligase from Ureaplasma parvum serovar 3 (strain ATCC 27815 / 27 / NCTC 11736).